The following is a 347-amino-acid chain: Guanine nucleotide-binding protein subunit beta (347 aa).

WD repeat units follow at residues 60-90 (GHLA…LVWD), 102-132 (LRSS…SIYN), 148-177 (SHTG…ILWD), 189-219 (DHNG…KLWD), 231-261 (GHEA…RLFD), 275-305 (NILC…NVWD), and 317-347 (GHGN…KIWA).

It belongs to the WD repeat G protein beta family. In terms of assembly, g proteins are composed of 3 units, alpha, beta and gamma. Interacts with gpgA, and this requires phlp1.

Its subcellular location is the cytoplasm. It is found in the cell membrane. In terms of biological role, guanine nucleotide-binding proteins (G proteins) are involved as a modulator or transducer in various transmembrane signaling systems. The beta and gamma chains are required for the GTPase activity, for replacement of GDP by GTP, and for G protein-effector interaction. Required for normal chemotaxis in response to cAMP and for aggregation during scorocarp development. This is Guanine nucleotide-binding protein subunit beta (gpbA) from Dictyostelium discoideum (Social amoeba).